A 238-amino-acid chain; its full sequence is tRNA (guanine-N(7)-)-methyltransferase (238 aa).

S-adenosyl-L-methionine contacts are provided by Glu-68, Glu-93, Asp-121, and Asp-143. Asp-143 is a catalytic residue. Residues Lys-147, Asp-179, and 216 to 219 (TRYE) each bind substrate.

It belongs to the class I-like SAM-binding methyltransferase superfamily. TrmB family.

It carries out the reaction guanosine(46) in tRNA + S-adenosyl-L-methionine = N(7)-methylguanosine(46) in tRNA + S-adenosyl-L-homocysteine. It participates in tRNA modification; N(7)-methylguanine-tRNA biosynthesis. Functionally, catalyzes the formation of N(7)-methylguanine at position 46 (m7G46) in tRNA. The protein is tRNA (guanine-N(7)-)-methyltransferase of Paramagnetospirillum magneticum (strain ATCC 700264 / AMB-1) (Magnetospirillum magneticum).